Consider the following 283-residue polypeptide: UPF0276 protein Nmul_A2550 (283 aa).

Belongs to the UPF0276 family.

The sequence is that of UPF0276 protein Nmul_A2550 from Nitrosospira multiformis (strain ATCC 25196 / NCIMB 11849 / C 71).